Reading from the N-terminus, the 680-residue chain is Translation factor GUF1 homolog, chloroplastic (680 aa).

The transit peptide at 1 to 51 (MAAKINSLAALVSLQASHHHHXSTPFYFSPFSPHLSTTLTSRRRSLRSAVV) directs the protein to the chloroplast. Residues 83 to 264 (SNIRNFCIIA…AIVKRIPPPC (182 aa)) enclose the tr-type G domain. Residues 92 to 99 (AHIDHGKS), 157 to 161 (DTPGH), and 211 to 214 (NKID) each bind GTP.

The protein belongs to the TRAFAC class translation factor GTPase superfamily. Classic translation factor GTPase family. LepA subfamily.

The protein localises to the plastid. It is found in the chloroplast. The catalysed reaction is GTP + H2O = GDP + phosphate + H(+). Its function is as follows. Promotes chloroplast protein synthesis. May act as a fidelity factor of the translation reaction, by catalyzing a one-codon backward translocation of tRNAs on improperly translocated ribosomes. The sequence is that of Translation factor GUF1 homolog, chloroplastic from Vitis vinifera (Grape).